Consider the following 326-residue polypeptide: Aspartate--ammonia ligase (326 aa).

The protein belongs to the class-II aminoacyl-tRNA synthetase family. AsnA subfamily.

Its subcellular location is the cytoplasm. It carries out the reaction L-aspartate + NH4(+) + ATP = L-asparagine + AMP + diphosphate + H(+). It participates in amino-acid biosynthesis; L-asparagine biosynthesis; L-asparagine from L-aspartate (ammonia route): step 1/1. The chain is Aspartate--ammonia ligase from Malacoplasma penetrans (strain HF-2) (Mycoplasma penetrans).